The chain runs to 271 residues: Glutamate racemase 3 (271 aa).

Residues Asp15–Ser16 and Tyr47–Gly48 contribute to the substrate site. Cys78 functions as the Proton donor/acceptor in the catalytic mechanism. Residue Asn79–Thr80 participates in substrate binding. Residue Cys185 is the Proton donor/acceptor of the active site. A substrate-binding site is contributed by Thr186–His187.

The protein belongs to the aspartate/glutamate racemases family.

It carries out the reaction L-glutamate = D-glutamate. Its pathway is cell wall biogenesis; peptidoglycan biosynthesis. Provides the (R)-glutamate required for cell wall biosynthesis. This Caldanaerobacter subterraneus subsp. tengcongensis (strain DSM 15242 / JCM 11007 / NBRC 100824 / MB4) (Thermoanaerobacter tengcongensis) protein is Glutamate racemase 3.